A 382-amino-acid polypeptide reads, in one-letter code: Succinate--CoA ligase [ADP-forming] subunit beta (382 aa).

Residues 9 to 240 form the ATP-grasp domain; the sequence is KELFLRYGVK…PRDITEFEAY (232 aa). ATP-binding positions include lysine 45, 52–54, valine 94, and glutamate 99; that span reads GRG. Asparagine 193 and aspartate 207 together coordinate Mg(2+). Residues asparagine 260 and 317–319 each bind substrate; that span reads GIT.

Belongs to the succinate/malate CoA ligase beta subunit family. Heterotetramer of two alpha and two beta subunits. Requires Mg(2+) as cofactor.

It catalyses the reaction succinate + ATP + CoA = succinyl-CoA + ADP + phosphate. The enzyme catalyses GTP + succinate + CoA = succinyl-CoA + GDP + phosphate. Its pathway is carbohydrate metabolism; tricarboxylic acid cycle; succinate from succinyl-CoA (ligase route): step 1/1. Succinyl-CoA synthetase functions in the citric acid cycle (TCA), coupling the hydrolysis of succinyl-CoA to the synthesis of either ATP or GTP and thus represents the only step of substrate-level phosphorylation in the TCA. The beta subunit provides nucleotide specificity of the enzyme and binds the substrate succinate, while the binding sites for coenzyme A and phosphate are found in the alpha subunit. The polypeptide is Succinate--CoA ligase [ADP-forming] subunit beta (Pyrobaculum islandicum (strain DSM 4184 / JCM 9189 / GEO3)).